Reading from the N-terminus, the 143-residue chain is Glutaredoxin-2 (143 aa).

A mitochondrion-targeting transit peptide spans 1 to 30 (METNFSFDSNLIVIIIITLFATRIIAKRFL). A Phosphoserine modification is found at S37. In terms of domain architecture, Glutaredoxin spans 41-143 (VAHVKDLIGQ…LAEILKPVFQ (103 aa)). 58–63 (KTYCPY) provides a ligand contact to glutathione. At C61 the chain carries S-glutathionyl cysteine; alternate. A disulfide bond links C61 and C64. S91 is modified (phosphoserine). Residues V109 and 122-123 (NS) each bind glutathione.

The protein belongs to the glutaredoxin family.

It localises to the cytoplasm. The protein resides in the mitochondrion. The catalysed reaction is 2 glutathione + H2O2 = glutathione disulfide + 2 H2O. The enzyme catalyses 1-chloro-2,4-dinitrobenzene + glutathione = 2,4-dinitrophenyl-S-glutathione + chloride + H(+). It catalyses the reaction RX + glutathione = an S-substituted glutathione + a halide anion + H(+). Functionally, component of the glutathione system which performs several activities such as glutathione-dependent oxidoreductase, glutathione peroxidase and glutathione S-transferase (GST) activity. The disulfide bond functions as an electron carrier in the glutathione-dependent synthesis of deoxyribonucleotides by the enzyme ribonucleotide reductase. In addition, it is also involved in reducing cytosolic protein- and non-protein-disulfides in a coupled system with glutathione reductase. Required for resistance to reactive oxygen species (ROS) by directly reducing hydroperoxides and for the detoxification of ROS-mediated damage. GRX2 is more active as an oxidoreductase than GRX1. Responsible for the S-glutathionylation of DHBP synthase. The polypeptide is Glutaredoxin-2 (GRX2) (Saccharomyces cerevisiae (strain ATCC 204508 / S288c) (Baker's yeast)).